We begin with the raw amino-acid sequence, 515 residues long: ATP synthase subunit alpha (515 aa).

171-178 is a binding site for ATP; the sequence is GDRQTGKT.

Belongs to the ATPase alpha/beta chains family. F-type ATPases have 2 components, CF(1) - the catalytic core - and CF(0) - the membrane proton channel. CF(1) has five subunits: alpha(3), beta(3), gamma(1), delta(1), epsilon(1). CF(0) has three main subunits: a(1), b(2) and c(9-12). The alpha and beta chains form an alternating ring which encloses part of the gamma chain. CF(1) is attached to CF(0) by a central stalk formed by the gamma and epsilon chains, while a peripheral stalk is formed by the delta and b chains.

The protein resides in the cell inner membrane. It catalyses the reaction ATP + H2O + 4 H(+)(in) = ADP + phosphate + 5 H(+)(out). Functionally, produces ATP from ADP in the presence of a proton gradient across the membrane. The alpha chain is a regulatory subunit. The sequence is that of ATP synthase subunit alpha from Coxiella burnetii (strain CbuK_Q154) (Coxiella burnetii (strain Q154)).